Here is a 213-residue protein sequence, read N- to C-terminus: Redox-sensing transcriptional repressor Rex (213 aa).

The segment at residues 16–55 is a DNA-binding region (H-T-H motif); sequence VYSRFLERMDRNGIVTVSSGEIAEGVGVSSAQVRKDLAYF. 90–95 contributes to the NAD(+) binding site; that stretch reads GAGNLG.

This sequence belongs to the transcriptional regulatory Rex family. Homodimer.

It is found in the cytoplasm. Its function is as follows. Modulates transcription in response to changes in cellular NADH/NAD(+) redox state. The sequence is that of Redox-sensing transcriptional repressor Rex from Pelotomaculum thermopropionicum (strain DSM 13744 / JCM 10971 / SI).